The following is a 1083-amino-acid chain: RecBCD enzyme subunit RecB (1083 aa).

The UvrD-like helicase ATP-binding domain maps to 1-323 (MKVFDLLGPL…QTLGTNWRSD (323 aa)). The tract at residues 1–704 (MKVFDLLGPL…RGRAPGEAIV (704 aa)) is DNA-binding and helicase activity, interacts with RecC. 21–28 (ASAGTGKT) serves as a coordination point for ATP. The UvrD-like helicase C-terminal domain maps to 349–607 (VQARHQGHRL…QIMTVWVSKG (259 aa)). Residues 765 to 1083 (AWKRTSYSGL…LSKLLDAEAP (319 aa)) form a nuclease activity, interacts with RecD and RecA region. Mg(2+)-binding residues include His830, Asp962, and Asp975. Asp975 serves as the catalytic For nuclease activity.

It belongs to the helicase family. UvrD subfamily. As to quaternary structure, heterotrimer of RecB, RecC and RecD. All subunits contribute to DNA-binding. Interacts with RecA. Requires Mg(2+) as cofactor.

The catalysed reaction is Exonucleolytic cleavage (in the presence of ATP) in either 5'- to 3'- or 3'- to 5'-direction to yield 5'-phosphooligonucleotides.. The enzyme catalyses Couples ATP hydrolysis with the unwinding of duplex DNA by translocating in the 3'-5' direction.. It catalyses the reaction ATP + H2O = ADP + phosphate + H(+). In terms of biological role, a helicase/nuclease that prepares dsDNA breaks (DSB) for recombinational DNA repair. Binds to DSBs and unwinds DNA via a highly rapid and processive ATP-dependent bidirectional helicase activity. Holoenzyme degrades any linearized DNA that is unable to undergo homologous recombination. In the holoenzyme this subunit contributes DNA-dependent ATPase activity, exonuclease activity and 3'-5' helicase activity. Unlike the case in E.coli, suppresses RecA-dependent homologous recombination, is instead required for single-strand annealing pathway repair of DSB. The chain is RecBCD enzyme subunit RecB from Mycolicibacterium smegmatis (strain ATCC 700084 / mc(2)155) (Mycobacterium smegmatis).